The following is a 51-amino-acid chain: SPbeta prophage-derived uncharacterized protein YorQ (51 aa).

The protein is SPbeta prophage-derived uncharacterized protein YorQ (yorQ) of Bacillus subtilis (strain 168).